The following is a 247-amino-acid chain: Acetoacetate decarboxylase (247 aa).

Lys116 functions as the Schiff-base intermediate with acetoacetate in the catalytic mechanism.

This sequence belongs to the ADC family.

The enzyme catalyses acetoacetate + H(+) = acetone + CO2. Catalyzes the conversion of acetoacetate to acetone and carbon dioxide. In Ralstonia nicotianae (strain ATCC BAA-1114 / GMI1000) (Ralstonia solanacearum), this protein is Acetoacetate decarboxylase.